The primary structure comprises 187 residues: Probable chorismate pyruvate-lyase (187 aa).

Residues arginine 77, leucine 115, and glutamate 174 each contribute to the substrate site.

It belongs to the UbiC family.

It localises to the cytoplasm. It carries out the reaction chorismate = 4-hydroxybenzoate + pyruvate. Its pathway is cofactor biosynthesis; ubiquinone biosynthesis. Its function is as follows. Removes the pyruvyl group from chorismate, with concomitant aromatization of the ring, to provide 4-hydroxybenzoate (4HB) for the ubiquinone pathway. The protein is Probable chorismate pyruvate-lyase of Shewanella sp. (strain ANA-3).